The following is a 404-amino-acid chain: Tryptophan synthase beta chain (404 aa).

Residue lysine 98 is modified to N6-(pyridoxal phosphate)lysine.

This sequence belongs to the TrpB family. As to quaternary structure, tetramer of two alpha and two beta chains. Requires pyridoxal 5'-phosphate as cofactor.

It carries out the reaction (1S,2R)-1-C-(indol-3-yl)glycerol 3-phosphate + L-serine = D-glyceraldehyde 3-phosphate + L-tryptophan + H2O. It participates in amino-acid biosynthesis; L-tryptophan biosynthesis; L-tryptophan from chorismate: step 5/5. In terms of biological role, the beta subunit is responsible for the synthesis of L-tryptophan from indole and L-serine. The chain is Tryptophan synthase beta chain from Rhodopseudomonas palustris (strain BisB5).